The primary structure comprises 56 residues: Large ribosomal subunit protein bL32 (56 aa).

The interval 1–21 (MAVQQNRKTRSRRGMRRSHDA) is disordered. Positions 7 to 16 (RKTRSRRGMR) are enriched in basic residues.

The protein belongs to the bacterial ribosomal protein bL32 family.

The polypeptide is Large ribosomal subunit protein bL32 (Vibrio cholerae serotype O1 (strain ATCC 39541 / Classical Ogawa 395 / O395)).